A 131-amino-acid chain; its full sequence is Pancreatic polypeptide prohormone (131 aa).

The N-terminal stretch at 1–29 (MAAAHRCLFLLLLSTCVALLLQPPLGALG) is a signal peptide. Tyrosine 65 bears the Tyrosine amide mark.

It belongs to the NPY family.

The protein localises to the secreted. Its function is as follows. Hormone secreted by pancreatic cells that acts as a regulator of pancreatic and gastrointestinal functions probably by signaling through the G protein-coupled receptor NPY4R2. The protein is Pancreatic polypeptide prohormone (PPY) of Bos taurus (Bovine).